The primary structure comprises 439 residues: Probable serine/threonine-protein kinase WNK6 (439 aa).

The interval 1-30 (MMPPKPAAEDVADEQPEPPDEDPDVAEADP) is disordered. Residues 10-27 (DVADEQPEPPDEDPDVAE) show a composition bias toward acidic residues. The region spanning 35–293 (LRYREIIGSG…ASELLKSPFL (259 aa)) is the Protein kinase domain. ATP contacts are provided by residues 116-119 (TELF) and Lys-166. Asp-183 functions as the Proton acceptor in the catalytic mechanism.

The protein belongs to the protein kinase superfamily. Ser/Thr protein kinase family. WNK subfamily.

The enzyme catalyses L-seryl-[protein] + ATP = O-phospho-L-seryl-[protein] + ADP + H(+). It carries out the reaction L-threonyl-[protein] + ATP = O-phospho-L-threonyl-[protein] + ADP + H(+). This Oryza sativa subsp. japonica (Rice) protein is Probable serine/threonine-protein kinase WNK6 (WNK6).